The following is a 49-amino-acid chain: Large ribosomal subunit protein bL33A (49 aa).

It belongs to the bacterial ribosomal protein bL33 family.

In Geobacillus thermodenitrificans (strain NG80-2), this protein is Large ribosomal subunit protein bL33A.